The chain runs to 89 residues: Small ribosomal subunit protein uS17 (89 aa).

Belongs to the universal ribosomal protein uS17 family. Part of the 30S ribosomal subunit.

One of the primary rRNA binding proteins, it binds specifically to the 5'-end of 16S ribosomal RNA. This Paracidovorax citrulli (strain AAC00-1) (Acidovorax citrulli) protein is Small ribosomal subunit protein uS17.